The following is a 577-amino-acid chain: E3 ubiquitin protein ligase RIN3 (577 aa).

The next 6 helical transmembrane spans lie at 3–23, 58–78, 120–140, 162–182, 191–211, and 272–292; these read ITYL…LQVW, TTIA…VLSL, GVLW…QALA, YSAL…SLMI, YLLL…ALLI, and YLHI…VLFL. The segment at 337–379 adopts an RING-type; atypical zinc-finger fold; sequence CAICREPMAKAKRLHCNHLFHLGCLRSWLDQGLNEVYSCPTCR. One can recognise a CUE domain in the interval 537 to 577; it reads SILAMAETVREVLPHVPDEIIFQDLQRTNSVSVTVNNLLQM.

Interacts (via C-terminus) with RPM1 (via N-terminus).

The protein localises to the membrane. It catalyses the reaction S-ubiquitinyl-[E2 ubiquitin-conjugating enzyme]-L-cysteine + [acceptor protein]-L-lysine = [E2 ubiquitin-conjugating enzyme]-L-cysteine + N(6)-ubiquitinyl-[acceptor protein]-L-lysine.. The protein operates within protein modification; protein ubiquitination. E3 ubiquitin protein ligase that acts as a positive regulator of RPM1- and RPS2-dependent hypersensitive response (HR), in association with RIN2. Probably not required for RPM1 degradation during HR. The polypeptide is E3 ubiquitin protein ligase RIN3 (RIN3) (Arabidopsis thaliana (Mouse-ear cress)).